The sequence spans 454 residues: MLNQNSHFIFIILAIFLVLPLSLLSKNVNAQIPLRRHLLSHESEHYAVIFDAGSTGSRVHVFRFDEKLGLLPIGNNIEYFMATEPGLSSYAEDPKAAANSLEPLLDGAEGVVPQELQSETPLELGATAGLRMLKGDAAEKILQAVRNLVKNQSTFHSKDQWVTILDGTQEGSYMWAAINYLLGNLGKDYKSTTATIDLGGGSVQMAYAISNEQFAKAPQNEDGEPYVQQKHLMSKDYNLYVHSYLNYGQLAGRAEIFKASRNESNPCALEGCDGYYSYGGVDYKVKAPKKGSSWKRCRRLTRHALKINAKCNIEECTFNGVWNGGGGDGQKNIHASSFFYDIGAQVGIVDTKFPSALAKPIQYLNAAKVACQTNVADIKSIFPKTQDRNIPYLCMDLIYEYTLLVDGFGLNPHKEITVIHDVQYKNYLVGAAWPLGCAIDLVSSTTNKIRVASS.

Residues 1-7 lie on the Cytoplasmic side of the membrane; that stretch reads MLNQNSH. Residues 8–28 form a helical; Signal-anchor for type II membrane protein membrane-spanning segment; sequence FIFIILAIFLVLPLSLLSKNV. The Extracellular portion of the chain corresponds to 29–454; the sequence is NAQIPLRRHL…TTNKIRVASS (426 aa). 48–58 lines the ATP pocket; that stretch reads VIFDAGSTGSR. An N-linked (GlcNAc...) asparagine glycan is attached at Asn151. Glu170 acts as the Proton acceptor in catalysis. 194-204 lines the ATP pocket; that stretch reads ATIDLGGGSVQ. Asn262 is a glycosylation site (N-linked (GlcNAc...) asparagine).

Belongs to the GDA1/CD39 NTPase family. Ca(2+) serves as cofactor. In terms of processing, the N-terminus is blocked.

Its subcellular location is the membrane. It carries out the reaction a ribonucleoside 5'-triphosphate + 2 H2O = a ribonucleoside 5'-phosphate + 2 phosphate + 2 H(+). Catalyzes the hydrolysis of phosphoanhydride bonds of nucleoside tri- and di-phosphates. The protein is Apyrase (RROP1) of Solanum tuberosum (Potato).